Reading from the N-terminus, the 185-residue chain is NADH-ubiquinone oxidoreductase chain 6 (185 aa).

5 consecutive transmembrane segments (helical) span residues S3–P23, S28–L48, I54–I74, H87–P107, and E134–A154.

The protein belongs to the complex I subunit 6 family.

The protein resides in the mitochondrion membrane. The catalysed reaction is a ubiquinone + NADH + 5 H(+)(in) = a ubiquinol + NAD(+) + 4 H(+)(out). Core subunit of the mitochondrial membrane respiratory chain NADH dehydrogenase (Complex I) that is believed to belong to the minimal assembly required for catalysis. Complex I functions in the transfer of electrons from NADH to the respiratory chain. The immediate electron acceptor for the enzyme is believed to be ubiquinone. This is NADH-ubiquinone oxidoreductase chain 6 (ND6) from Sarcophyton glaucum (Toadstool umbrella leather coral).